The following is a 680-amino-acid chain: Viral IRF2-like protein (680 aa).

The segment at residues 7–103 is a DNA-binding region (IRF tryptophan pentad repeat); that stretch reads SEWLTDFIID…RPFTIYKGKM (97 aa). Disordered regions lie at residues 156-201, 220-257, 343-365, and 403-423; these read SLRK…SENE, EEPE…HVHT, ETAS…ESVS, and ASPQ…ESVS. Residues 168–188 are compositionally biased toward low complexity; it reads KQAAAVATPTTSSAAEVSSRS. The span at 191–200 shows a compositional bias: acidic residues; the sequence is EDTESSDSEN. A compositionally biased stretch (low complexity) spans 220–240; sequence EEPEPSGFGSSGQSSSLLAPD.

This sequence belongs to the IRF family. As to quaternary structure, interacts with host EIF2AK2/PKR. Interacts with host USP7.

Its subcellular location is the host nucleus. The protein resides in the host cytoplasm. Functionally, DNA-binding transcription factor that plays a role in the modulation of host immune response. Acts by interacting with host EIF2AK2/PKR and inhibiting its activation. In turn, EIF2AK2/PKR substrates including EIF2S1 or histone H2A are not phosphorylated. Inhibits type I interferon signaling by targeting host IRF3 during viral reactivation from latency. Attenuates the transcriptional activity of host FOXO3 via activation of the AKT1 signaling pathway, inhibiting FOXO3-mediated apoptosis. Also suppresses the expression of viral early lytic genes in both newly infected and reactivated infected host cells allowing regulation of viral life cycle by harnessing the interferon pathway. Mechanistically, promotes host PML bodies formation as well as host antiviral restriction factors IFIT1-3 expression leading to inhibition of viral early lytic proteins. Also regulates host TRAF3 and TRAF6 ubiquitination by interacting with USP7 deubiquitinase thereby influencing TRAF3/6-mediated signal transduction. This chain is Viral IRF2-like protein (vIRF-2), found in Human herpesvirus 8 type P (isolate GK18) (HHV-8).